The sequence spans 657 residues: MEKKRSYYALLIPTLLTVWLACAGHSCARHAKAKPPMAGPPRCPNCGPMVVPYPLSTGPTCGDQAYRINCVGGKLYFGALHGSSYVITSINSVTQRIVLRPPGLASSVSCISADVSKQGLELDPHLPFSITSSNTILLLNCSQAMLQAPIDCSPTSLCYSYIKNNASPCSKAPLCCTFRTDGSQTAYTIRINGGGCLAYQSFVGLNPNKEVPPPGKKWPDTGLELQWALPKEPVCKTDVDCNLLLGKSKCLPDPTSLGLKRCSCKKGLEWDPVNAICGKCRHGKHCKKKKKTVVFAGAAVAVVGVTLAIAVAVIGTKHSHQKVKKDIHKNIVKEREEMLSANSTGKSSRIFTGREITKATNNFSKDNLIGTGGFGEVFKAVLEDGTITAIKRAKLNNTKGTDQILNEVRILCQVNHRSLVRLLGCCVDLELPLLIYEFIPNGTLFEHLHGSSDRTWKPLTWRRRLQIAYQTAEGLAYLHSAAQPPIYHRDVKSSNILLDEKLNAKVSDFGLSRLVDLTETANNESHIFTGAQGTLGYLDPEYYRNFQLTDKSDVYSFGVVLLEMVTSKKAIDFTREEEDVNLVMYINKMMDQERLTECIDPLLKKTANKIDMQTIQQLGNLASACLNERRQNRPSMKEVADEIEYIINILSQEVTET.

The signal sequence occupies residues 1 to 23 (MEKKRSYYALLIPTLLTVWLACA). The Extracellular portion of the chain corresponds to 24-293 (GHSCARHAKA…KHCKKKKKTV (270 aa)). Residue Asn140 is glycosylated (N-linked (GlcNAc...) asparagine). The chain crosses the membrane as a helical span at residues 294–314 (VFAGAAVAVVGVTLAIAVAVI). The Cytoplasmic segment spans residues 315-657 (GTKHSHQKVK…NILSQEVTET (343 aa)). One can recognise a Protein kinase domain in the interval 363 to 646 (FSKDNLIGTG…KEVADEIEYI (284 aa)). Residues 369-377 (IGTGGFGEV) and Lys391 each bind ATP. Asp490 (proton acceptor) is an active-site residue.

It belongs to the protein kinase superfamily. Ser/Thr protein kinase family.

Its subcellular location is the membrane. The catalysed reaction is L-seryl-[protein] + ATP = O-phospho-L-seryl-[protein] + ADP + H(+). It carries out the reaction L-threonyl-[protein] + ATP = O-phospho-L-threonyl-[protein] + ADP + H(+). Its function is as follows. Serine/threonine-protein kinase that may function as a signaling receptor of extracellular matrix component. This Arabidopsis thaliana (Mouse-ear cress) protein is Wall-associated receptor kinase-like 20 (WAKL20).